The chain runs to 490 residues: MTIGSMENVEVFTSEGKGRGLKATKEFWAADVIFAERAYSAVVFDSLINFVCHTCFKRQEKLHRCGQCKFAHYCDRTCQKDAWLNHKNECAAIKKYGKVPNENIRLAARIMWRVEREGTGLTEGCLVSVDDLQNHVEHFGEEEQKELRVDVDTFLQYWPPQSQQFSMQYISHIFGVINCNGFTLSDQRGLQAVGVGIFPNLGLVNHDCWPNCTVIFNNGNHEAVKSMFHTQMRIELRALGKISEGEELTVSYIDFLHLSEERRRQLKKQYYFDCSCEHCQKGLKDDLFLAAKEDPKPSQEVVKEMIQFSKDTLEKIDKARSEGLYHEVVKLCRECLEKQEPVFADTNLYVLRLLSIASEVLSYLQAYEEASHYARRMVDGYMKLYHHNNAQLGMAVMRAGLTNWHAGHIEVGHGMICKAYAILLVTHGPSHPITKDLEAMRMQTEMELRMFRQNEFMYHKMREAALNNQPMQVMAEPSNEPAPALFHKKQ.

Residues 7 to 253 (ENVEVFTSEG…EGEELTVSYI (247 aa)) enclose the SET domain. 17-19 (KGR) serves as a coordination point for S-adenosyl-L-methionine. Zn(2+) is bound by residues cysteine 52, cysteine 55, cysteine 65, cysteine 68, cysteine 74, cysteine 78, histidine 86, and cysteine 90. An MYND-type zinc finger spans residues 52–90 (CHTCFKRQEKLHRCGQCKFAHYCDRTCQKDAWLNHKNEC). S-adenosyl-L-methionine is bound by residues histidine 135 and 205–206 (NH). Cysteine 208 contacts Zn(2+). Residue 270-272 (YYF) coordinates S-adenosyl-L-methionine. 3 residues coordinate Zn(2+): cysteine 274, cysteine 276, and cysteine 279.

It belongs to the class V-like SAM-binding methyltransferase superfamily. In terms of assembly, interacts with HDAC1, HDAC2 and HDAC3. Interacts (via MYND-type zinc finger) with NACA isoform skNAC. As to expression, expressed in cardiac and skeletal muscle, lymphocytes and thymus.

Its subcellular location is the cytoplasm. It is found in the nucleus. The enzyme catalyses L-lysyl(4)-[histone H3] + 3 S-adenosyl-L-methionine = N(6),N(6),N(6)-trimethyl-L-lysyl(4)-[histone H3] + 3 S-adenosyl-L-homocysteine + 3 H(+). Its function is as follows. Methylates histone H3 at 'Lys-4' (H3K4me). Acts as a transcriptional repressor. Essential for cardiomyocyte differentiation and cardiac morphogenesis. In Mus musculus (Mouse), this protein is Histone-lysine N-methyltransferase Smyd1 (Smyd1).